A 916-amino-acid polypeptide reads, in one-letter code: Transmembrane channel-like protein 2-A (916 aa).

Residues 1–13 (MPKKSDTTRKLED) show a composition bias toward basic and acidic residues. The disordered stretch occupies residues 1–159 (MPKKSDTTRK…DEEDESMSEG (159 aa)). The Cytoplasmic portion of the chain corresponds to 1 to 271 (MPKKSDTTRK…IFLRWMYGMN (271 aa)). The segment covering 14–26 (VGIEIDGDVDSAE) has biased composition (acidic residues). Basic residues-rich tracts occupy residues 31-45 (SKGK…GKRG) and 62-72 (KGRRAANKKKP). Over residues 97 to 107 (NVRERGDGDKK) the composition is skewed to basic and acidic residues. A compositionally biased stretch (basic residues) spans 108-117 (KSGKKGRRGG). The span at 118–138 (KKNEKGKGKDSDKDSDKDEKK) shows a compositional bias: basic and acidic residues. Residues 145–157 (DESDSDEEDESMS) are compositionally biased toward acidic residues. The chain crosses the membrane as a helical span at residues 272–292 (LVLFSLTFGLVVIPEVLMGLP). At 293-344 (YGSIPRKTVPREDQDTAMDYSVLTDFNGYCKYSVLFYGYYNNQRTIGFLKFR) the chain is on the extracellular side. The helical transmembrane segment at 345 to 365 (LPLSYLMVGIGTFGYSLMVVI) threads the bilayer. The Cytoplasmic portion of the chain corresponds to 366-438 (RTMAKNADVG…ENIHLRRFLR (73 aa)). The helical transmembrane segment at 439–459 (VLANFLITCTLGGSGYLIYFV) threads the bilayer. Over 460 to 478 (VKRSQEFQNMDNLSWYEKN) the chain is Extracellular. Residues 479-499 (ELEIIMSLLGLVGPMLFETIA) form a helical membrane-spanning segment. At 500 to 516 (ELEEYHPRIALKWQLGR) the chain is on the cytoplasmic side. A helical membrane pass occupies residues 517–537 (IFALFLGNLYTFLLALFDEVN). Residues 538–649 (AKLEEEESIK…EFDISGNVLG (112 aa)) lie on the Extracellular side of the membrane. A helical membrane pass occupies residues 650–670 (LVFNQGMIWMGAFYAPGLVGI). The Cytoplasmic segment spans residues 671-704 (NVLRLLSSMYYQCWAVMACNVPHERVFKASKSNN). The helical transmembrane segment at 705–725 (FYMGLLLLILFLSLLPVVYTI) threads the bilayer. The Extracellular portion of the chain corresponds to 726-762 (MSLPPSFDCGPFSGKERMFDVVMETIDLDLPAFMGTL). The chain crosses the membrane as a helical span at residues 763 to 783 (FGYVANPGLVISAVLLMVLAI). At 784–916 (YYLNSVSEAY…RGQGPPPRRQ (133 aa)) the chain is on the cytoplasmic side. A compositionally biased stretch (basic and acidic residues) spans 804-818 (MQMARDEEKNRRNNK). A disordered region spans residues 804 to 916 (MQMARDEEKN…RGQGPPPRRQ (113 aa)). Over residues 883 to 892 (ARGPVTRAPG) the composition is skewed to low complexity.

This sequence belongs to the TMC family. In terms of assembly, interacts (via N-terminus) with both isoforms CD1 and CD3 of PCDH15A (via cytoplasmic domain); this interaction is required for mechanotransduction of the hair cells and correct localization of PCDH15A in hair bundles of the hair cells. In terms of tissue distribution, in adults, expression is restricted to the hair cells of inner ear and lateral line organ. Expressed at higher levels in the larval inner ear than in the lateral-line neuromasts.

Its subcellular location is the cell membrane. The catalysed reaction is Ca(2+)(in) = Ca(2+)(out). Functionally, pore-forming subunit of the mechanotransducer (MET) non-selective cation channel complex located at tips of hair-cell stereocilia. Highly permeable to calcium and likely transports monovalent cations. This chain is Transmembrane channel-like protein 2-A, found in Danio rerio (Zebrafish).